The sequence spans 325 residues: MILSIESSCDDSAIAITEIATNRLLFHKKISQELEHSVYGGVVPELAARLHAEALPRILEECNPYFKDLKAVAVTTTPGLSVTLVEGVTMAKAISIALNIPIIGVNHLVGHIYSLFIEKESYFPLTVLLVSGGHTQVMEVKSFTEIKTVAKSMDDSFGESFDKVAKMMNLGYPGGPVIEALAKGGDRKRYNFTVPLFQSPLIAFSYSGLKNSVRLAVEAANEEDFKDIAASFEHIATAHIIQKLKKYFKEVPPKTFAIVGGASANLYLRSSIEELLKPHGADLLLSELKYCSDNAAMIGRVAVEMYKESLFSDLSSLEVCPKSVI.

Histidine 107 and histidine 111 together coordinate Fe cation. Substrate is bound by residues 129–133, aspartate 162, glycine 175, and asparagine 265; that span reads LVSGG. Residue aspartate 293 participates in Fe cation binding.

This sequence belongs to the KAE1 / TsaD family. Fe(2+) is required as a cofactor.

It localises to the cytoplasm. It carries out the reaction L-threonylcarbamoyladenylate + adenosine(37) in tRNA = N(6)-L-threonylcarbamoyladenosine(37) in tRNA + AMP + H(+). Its function is as follows. Required for the formation of a threonylcarbamoyl group on adenosine at position 37 (t(6)A37) in tRNAs that read codons beginning with adenine. Is involved in the transfer of the threonylcarbamoyl moiety of threonylcarbamoyl-AMP (TC-AMP) to the N6 group of A37, together with TsaE and TsaB. TsaD likely plays a direct catalytic role in this reaction. The protein is tRNA N6-adenosine threonylcarbamoyltransferase of Sulfurimonas denitrificans (strain ATCC 33889 / DSM 1251) (Thiomicrospira denitrificans (strain ATCC 33889 / DSM 1251)).